The chain runs to 255 residues: 3-dehydroquinate dehydratase (255 aa).

Residues Glu47–Arg49 and Arg83 each bind 3-dehydroquinate. His144 functions as the Proton donor/acceptor in the catalytic mechanism. The active-site Schiff-base intermediate with substrate is Lys171. Residues Arg214, Ser233, and Gln237 each contribute to the 3-dehydroquinate site.

It belongs to the type-I 3-dehydroquinase family. In terms of assembly, homodimer or homotetramer.

It carries out the reaction 3-dehydroquinate = 3-dehydroshikimate + H2O. Its pathway is metabolic intermediate biosynthesis; chorismate biosynthesis; chorismate from D-erythrose 4-phosphate and phosphoenolpyruvate: step 3/7. In terms of biological role, involved in the third step of the chorismate pathway, which leads to the biosynthesis of aromatic amino acids. Catalyzes the cis-dehydration of 3-dehydroquinate (DHQ) and introduces the first double bond of the aromatic ring to yield 3-dehydroshikimate. The reaction involves the formation of an imine intermediate between the keto group of 3-dehydroquinate and the epsilon-amino group of Lys-170 at the active site. The polypeptide is 3-dehydroquinate dehydratase (Clostridioides difficile (strain 630) (Peptoclostridium difficile)).